The sequence spans 162 residues: Cytochrome c-type biogenesis protein CcmE (162 aa).

At 1 to 8 (MNPRRKKR) the chain is on the cytoplasmic side. Residues 9–29 (LTLAVALIGGVAAIASLLLYA) form a helical; Signal-anchor for type II membrane protein membrane-spanning segment. The Periplasmic portion of the chain corresponds to 30 to 162 (LNSNLNLFYT…YSQQKAPDTK (133 aa)). 2 residues coordinate heme: His-131 and Tyr-135. Residues 139–162 (EVAEAMGQKHEKLDYSQQKAPDTK) are disordered. Polar residues predominate over residues 153–162 (YSQQKAPDTK).

This sequence belongs to the CcmE/CycJ family.

It is found in the cell inner membrane. Its function is as follows. Heme chaperone required for the biogenesis of c-type cytochromes. Transiently binds heme delivered by CcmC and transfers the heme to apo-cytochromes in a process facilitated by CcmF and CcmH. The chain is Cytochrome c-type biogenesis protein CcmE from Shewanella putrefaciens (strain CN-32 / ATCC BAA-453).